The chain runs to 841 residues: Envelope glycoprotein H (841 aa).

The N-terminal stretch at 1-17 (MFALVLAVVILPLWTTA) is a signal peptide. N-linked (GlcNAc...) asparagine; by host glycans are attached at residues Asn-18, Asn-45, and Asn-217. Residues 18-802 (NKSYVTPTPA…ERRQAIRMSG (785 aa)) are Virion surface-facing. The tract at residues 246–309 (DSGRVEVNIG…DPGPSYRVYL (64 aa)) is interaction with gL. N-linked (GlcNAc...) asparagine; by host glycosylation is found at Asn-317, Asn-499, Asn-522, Asn-760, and Asn-783. Residues 803-823 (QYLGASLGGAFLAVVGFGIIG) form a helical membrane-spanning segment. Residues 824 to 841 (WMLCGNSRLREYNKIPLT) are Intravirion-facing.

It belongs to the herpesviridae glycoprotein H family. Interacts with glycoprotein L (gL); this interaction is necessary for the correct processing and cell surface expression of gH. The heterodimer gH/gL seems to interact with gB trimers during fusion. Post-translationally, N-glycosylated, O-glycosylated, and sialylated.

The protein resides in the virion membrane. Its subcellular location is the host cell membrane. It is found in the host endosome membrane. Functionally, the heterodimer glycoprotein H-glycoprotein L is required for the fusion of viral and plasma membranes leading to virus entry into the host cell. Following initial binding to host receptor, membrane fusion is mediated by the fusion machinery composed of gB and the heterodimer gH/gL. May also be involved in the fusion between the virion envelope and the outer nuclear membrane during virion morphogenesis. The protein is Envelope glycoprotein H of Varicella-zoster virus (strain Oka vaccine) (HHV-3).